The sequence spans 261 residues: uncharacterized protein (261 aa).

Residues 1–22 (MIHSKKLTLGICLVLLIILIGG) form the signal peptide. Cys23 carries the N-palmitoyl cysteine lipid modification. Cys23 is lipidated: S-diacylglycerol cysteine.

Belongs to the staphylococcal tandem lipoprotein family.

The protein localises to the cell membrane. This is an uncharacterized protein from Staphylococcus aureus (strain USA300).